The chain runs to 107 residues: UPF0145 protein CHY_0465 (107 aa).

It belongs to the UPF0145 family.

The chain is UPF0145 protein CHY_0465 from Carboxydothermus hydrogenoformans (strain ATCC BAA-161 / DSM 6008 / Z-2901).